The sequence spans 178 residues: uncharacterized protein (178 aa).

This is an uncharacterized protein from Schizosaccharomyces pombe (strain 972 / ATCC 24843) (Fission yeast).